The following is a 437-amino-acid chain: UDP-N-acetylmuramoylalanine--D-glutamate ligase (437 aa).

112 to 118 is a binding site for ATP; sequence GSNGKST.

Belongs to the MurCDEF family.

It is found in the cytoplasm. The enzyme catalyses UDP-N-acetyl-alpha-D-muramoyl-L-alanine + D-glutamate + ATP = UDP-N-acetyl-alpha-D-muramoyl-L-alanyl-D-glutamate + ADP + phosphate + H(+). It participates in cell wall biogenesis; peptidoglycan biosynthesis. Cell wall formation. Catalyzes the addition of glutamate to the nucleotide precursor UDP-N-acetylmuramoyl-L-alanine (UMA). The sequence is that of UDP-N-acetylmuramoylalanine--D-glutamate ligase from Haemophilus influenzae (strain PittEE).